The primary structure comprises 429 residues: Melanoma-associated antigen 11 (429 aa).

Disordered regions lie at residues 1–30 (METQ…GDFG) and 188–215 (IFGS…IDPE). A compositionally biased stretch (polar residues) spans 194–209 (DEGSGSQEKEGPSTSP). The region spanning 222–421 (LHDKIIDLVH…TSYPSLYEDA (200 aa)) is the MAGE domain.

As to expression, expressed in tumors of several types, such as melanoma, head and neck squamous cell carcinoma, lung carcinoma and breast carcinoma. Expressed in testis, ovary, prostate, cancerous prostate, breast and adrenal tissue.

The protein resides in the nucleus. The protein localises to the cytoplasm. In terms of biological role, acts as androgen receptor coregulator that increases androgen receptor activity by modulating the receptors interdomain interaction. May play a role in embryonal development and tumor transformation or aspects of tumor progression. This is Melanoma-associated antigen 11 from Homo sapiens (Human).